Reading from the N-terminus, the 132-residue chain is MKGLGSTIVRSLPNGARLVCADNTGAKELEVIAVKNYVGTVRRLPAGGVGHMVFVSVKKGTPEMRKQVLPAIIIRQKKEYKRADGTRVKFEDNAAVIVTPEGTPKGSEIKGPVSKEAAERWPGVSRLAKIIH.

The protein belongs to the universal ribosomal protein uL14 family. Part of the 50S ribosomal subunit. Forms a cluster with proteins L3 and L24e, part of which may contact the 16S rRNA in 2 intersubunit bridges.

Functionally, binds to 23S rRNA. Forms part of two intersubunit bridges in the 70S ribosome. The protein is Large ribosomal subunit protein uL14 of Methanococcus maripaludis (strain C5 / ATCC BAA-1333).